A 494-amino-acid chain; its full sequence is Alpha-amylase-related protein (494 aa).

A signal peptide spans 1–20; it reads MFKFASAVILCVVAASSTLA. Gln-21 is modified (pyrrolidone carboxylic acid). A disulfide bond links Cys-48 and Cys-104. Ca(2+) contacts are provided by Asn-118, Gln-169, and Asp-178. A disulfide bridge links Cys-157 with Cys-171. Residue Arg-206 participates in chloride binding. Asp-208 functions as the Nucleophile in the catalytic mechanism. His-212 lines the Ca(2+) pocket. Residue Glu-245 is the Proton donor of the active site. Residues Asn-308 and Arg-343 each coordinate chloride. 3 disulfide bridges follow: Cys-376-Cys-382, Cys-418-Cys-441, and Cys-448-Cys-460.

Belongs to the glycosyl hydrolase 13 family. Monomer. It depends on Ca(2+) as a cofactor. Chloride is required as a cofactor.

It localises to the secreted. It catalyses the reaction Endohydrolysis of (1-&gt;4)-alpha-D-glucosidic linkages in polysaccharides containing three or more (1-&gt;4)-alpha-linked D-glucose units.. The protein is Alpha-amylase-related protein (Amyrel) of Drosophila varians (Fruit fly).